The chain runs to 185 residues: MYCSDPPHPLHLVASDKQQKDHKLILSWKKPTMDSDPLGVFPNSPKYHPYYSQTTEFGGVIDLGLSLRTIQHEIYHSSGQRYCSNEGYRRKWGYVKVTMDGLVVGRKVCVLDHGSYSTLAHQLEDMFGMQSVSGLRLFQMESEFCLVYRDEEGLWRNAGDVPWNEFIESVERLRITRRNDAVLPF.

An EAR-like (transcriptional repression) motif is present at residues 63-67; the sequence is LGLSL. The 89-residue stretch at 92–180 folds into the PB1 domain; the sequence is WGYVKVTMDG…ERLRITRRND (89 aa).

It belongs to the Aux/IAA family. In terms of assembly, homodimers and heterodimers.

The protein localises to the nucleus. Its function is as follows. Aux/IAA proteins are short-lived transcriptional factors that function as repressors of early auxin response genes at low auxin concentrations. Repression is thought to result from the interaction with auxin response factors (ARFs), proteins that bind to the auxin-responsive promoter element (AuxRE). Formation of heterodimers with ARF proteins may alter their ability to modulate early auxin response genes expression. The polypeptide is Auxin-responsive protein IAA34 (IAA34) (Arabidopsis thaliana (Mouse-ear cress)).